We begin with the raw amino-acid sequence, 569 residues long: Potassium-transporting ATPase potassium-binding subunit (569 aa).

10 helical membrane-spanning segments follow: residues 5–25 (GWAEIALTLGLAVAIGWPLGV), 65–85 (GYAGALLAFNFVGFLLVYAVL), 135–155 (LVLTVQNFLSAATGATVAAAL), 179–199 (LYVLLPLSFVVAIVLVALGLP), 254–274 (LTNLITAVSINVLGWAAFFAF), 286–306 (ALVIAASILLSAGAATVYWTE), 383–403 (GIAVMIVMAVLAVFVAGLMVG), 422–442 (LLTVLAIPVATLGFSAIAAVL), 489–509 (MGVAMAMGRFMPIVAVLAMAG), and 528–548 (GGLFVGLLIGVILILGGLQFF).

Belongs to the KdpA family. In terms of assembly, the system is composed of three essential subunits: KdpA, KdpB and KdpC.

The protein localises to the cell inner membrane. Functionally, part of the high-affinity ATP-driven potassium transport (or Kdp) system, which catalyzes the hydrolysis of ATP coupled with the electrogenic transport of potassium into the cytoplasm. This subunit binds the periplasmic potassium ions and delivers the ions to the membrane domain of KdpB through an intramembrane tunnel. The sequence is that of Potassium-transporting ATPase potassium-binding subunit from Caulobacter sp. (strain K31).